Reading from the N-terminus, the 637-residue chain is Chaperone protein HtpG (637 aa).

The a; substrate-binding stretch occupies residues 1–345 (MSQQETHGFQ…SNDLPLNVSR (345 aa)). The segment at 346–562 (EILQDNHITK…EGEMSSQMIK (217 aa)) is b. Positions 563 to 637 (LMQAAGQPVP…MNQMLLANLK (75 aa)) are c.

This sequence belongs to the heat shock protein 90 family. In terms of assembly, homodimer.

The protein localises to the cytoplasm. Functionally, molecular chaperone. Has ATPase activity. The chain is Chaperone protein HtpG from Shewanella sp. (strain MR-7).